Consider the following 96-residue polypeptide: Transmembrane protein PMIS2 (96 aa).

The next 2 helical transmembrane spans lie at 31 to 51 and 76 to 96; these read VMLALLAMILFLPFGILAIYF and WFNMLAIVAFVGIIYILVLVL.

It belongs to the CD225/Dispanin family. Specifically expressed in testis.

Its subcellular location is the membrane. Its function is as follows. May play a role in spermatozoa mobility. In Mus musculus (Mouse), this protein is Transmembrane protein PMIS2.